The following is an 879-amino-acid chain: Alanine--tRNA ligase (879 aa).

Histidine 566, histidine 570, cysteine 668, and histidine 672 together coordinate Zn(2+).

It belongs to the class-II aminoacyl-tRNA synthetase family. Zn(2+) serves as cofactor.

Its subcellular location is the cytoplasm. It catalyses the reaction tRNA(Ala) + L-alanine + ATP = L-alanyl-tRNA(Ala) + AMP + diphosphate. Functionally, catalyzes the attachment of alanine to tRNA(Ala) in a two-step reaction: alanine is first activated by ATP to form Ala-AMP and then transferred to the acceptor end of tRNA(Ala). Also edits incorrectly charged Ser-tRNA(Ala) and Gly-tRNA(Ala) via its editing domain. The protein is Alanine--tRNA ligase of Clostridium botulinum (strain Loch Maree / Type A3).